A 179-amino-acid polypeptide reads, in one-letter code: Low molecular weight phosphotyrosine protein phosphatase (179 aa).

The active-site Nucleophile is cysteine 15. The active site involves arginine 21. Residue aspartate 148 is the Proton donor of the active site.

The protein belongs to the low molecular weight phosphotyrosine protein phosphatase family.

It localises to the cytoplasm. The enzyme catalyses O-phospho-L-tyrosyl-[protein] + H2O = L-tyrosyl-[protein] + phosphate. It catalyses the reaction a phosphate monoester + H2O = an alcohol + phosphate. In terms of biological role, acts on tyrosine phosphorylated proteins, low-MW aryl phosphates and natural and synthetic acyl phosphates. This is Low molecular weight phosphotyrosine protein phosphatase (acp1) from Dictyostelium discoideum (Social amoeba).